Reading from the N-terminus, the 573-residue chain is Glutamate--tRNA ligase (573 aa).

Residues 107–117 (PNPDGAFHLGN) carry the 'HIGH' region motif.

This sequence belongs to the class-I aminoacyl-tRNA synthetase family. Glutamate--tRNA ligase type 2 subfamily.

It localises to the cytoplasm. It catalyses the reaction tRNA(Glu) + L-glutamate + ATP = L-glutamyl-tRNA(Glu) + AMP + diphosphate. Functionally, catalyzes the attachment of glutamate to tRNA(Glu) in a two-step reaction: glutamate is first activated by ATP to form Glu-AMP and then transferred to the acceptor end of tRNA(Glu). The sequence is that of Glutamate--tRNA ligase from Thermococcus kodakarensis (strain ATCC BAA-918 / JCM 12380 / KOD1) (Pyrococcus kodakaraensis (strain KOD1)).